The sequence spans 341 residues: tRNA N6-adenosine threonylcarbamoyltransferase (341 aa).

The Fe cation site is built by H111 and H115. Residues 134-138, D167, G180, and N274 contribute to the substrate site; that span reads LVSGG. Residue D302 participates in Fe cation binding.

The protein belongs to the KAE1 / TsaD family. Fe(2+) serves as cofactor.

It localises to the cytoplasm. The catalysed reaction is L-threonylcarbamoyladenylate + adenosine(37) in tRNA = N(6)-L-threonylcarbamoyladenosine(37) in tRNA + AMP + H(+). Functionally, required for the formation of a threonylcarbamoyl group on adenosine at position 37 (t(6)A37) in tRNAs that read codons beginning with adenine. Is involved in the transfer of the threonylcarbamoyl moiety of threonylcarbamoyl-AMP (TC-AMP) to the N6 group of A37, together with TsaE and TsaB. TsaD likely plays a direct catalytic role in this reaction. The protein is tRNA N6-adenosine threonylcarbamoyltransferase of Paraburkholderia phymatum (strain DSM 17167 / CIP 108236 / LMG 21445 / STM815) (Burkholderia phymatum).